The primary structure comprises 342 residues: D-erythrose-4-phosphate dehydrogenase (342 aa).

Arg12 to Ile13 contacts NAD(+). Residues Ser154–Thr156, Arg200, Thr213–Lys214, and Arg236 contribute to the substrate site. The active-site Nucleophile is Cys155. Asn318 contacts NAD(+).

It belongs to the glyceraldehyde-3-phosphate dehydrogenase family. Epd subfamily. Homotetramer.

Its subcellular location is the cytoplasm. The catalysed reaction is D-erythrose 4-phosphate + NAD(+) + H2O = 4-phospho-D-erythronate + NADH + 2 H(+). Its pathway is cofactor biosynthesis; pyridoxine 5'-phosphate biosynthesis; pyridoxine 5'-phosphate from D-erythrose 4-phosphate: step 1/5. In terms of biological role, catalyzes the NAD-dependent conversion of D-erythrose 4-phosphate to 4-phosphoerythronate. This is D-erythrose-4-phosphate dehydrogenase from Klebsiella pneumoniae subsp. pneumoniae (strain ATCC 700721 / MGH 78578).